The following is a 196-amino-acid chain: Imidazoleglycerol-phosphate dehydratase (196 aa).

It belongs to the imidazoleglycerol-phosphate dehydratase family.

It localises to the cytoplasm. The catalysed reaction is D-erythro-1-(imidazol-4-yl)glycerol 3-phosphate = 3-(imidazol-4-yl)-2-oxopropyl phosphate + H2O. Its pathway is amino-acid biosynthesis; L-histidine biosynthesis; L-histidine from 5-phospho-alpha-D-ribose 1-diphosphate: step 6/9. The chain is Imidazoleglycerol-phosphate dehydratase from Granulibacter bethesdensis (strain ATCC BAA-1260 / CGDNIH1).